The chain runs to 457 residues: Siroheme synthase (457 aa).

Residues 1 to 204 form a precorrin-2 dehydrogenase /sirohydrochlorin ferrochelatase region; it reads MDHLPIFCQL…NDQKAITETT (204 aa). Residues 22–23 and 43–44 contribute to the NAD(+) site; these read DV and LA. Position 128 is a phosphoserine (Ser128). Residues 216–457 are uroporphyrinogen-III C-methyltransferase; that stretch reads GEVVLVGAGP…RDKLNWFSNH (242 aa). Pro225 contributes to the S-adenosyl-L-methionine binding site. Asp248 (proton acceptor) is an active-site residue. The active-site Proton donor is the Lys270. S-adenosyl-L-methionine is bound by residues 301–303, Ile306, 331–332, Met382, and Gly411; these read GGD and TA.

It in the N-terminal section; belongs to the precorrin-2 dehydrogenase / sirohydrochlorin ferrochelatase family. The protein in the C-terminal section; belongs to the precorrin methyltransferase family.

It catalyses the reaction uroporphyrinogen III + 2 S-adenosyl-L-methionine = precorrin-2 + 2 S-adenosyl-L-homocysteine + H(+). The enzyme catalyses precorrin-2 + NAD(+) = sirohydrochlorin + NADH + 2 H(+). The catalysed reaction is siroheme + 2 H(+) = sirohydrochlorin + Fe(2+). It participates in cofactor biosynthesis; adenosylcobalamin biosynthesis; precorrin-2 from uroporphyrinogen III: step 1/1. Its pathway is cofactor biosynthesis; adenosylcobalamin biosynthesis; sirohydrochlorin from precorrin-2: step 1/1. The protein operates within porphyrin-containing compound metabolism; siroheme biosynthesis; precorrin-2 from uroporphyrinogen III: step 1/1. It functions in the pathway porphyrin-containing compound metabolism; siroheme biosynthesis; siroheme from sirohydrochlorin: step 1/1. It participates in porphyrin-containing compound metabolism; siroheme biosynthesis; sirohydrochlorin from precorrin-2: step 1/1. Its function is as follows. Multifunctional enzyme that catalyzes the SAM-dependent methylations of uroporphyrinogen III at position C-2 and C-7 to form precorrin-2 via precorrin-1. Then it catalyzes the NAD-dependent ring dehydrogenation of precorrin-2 to yield sirohydrochlorin. Finally, it catalyzes the ferrochelation of sirohydrochlorin to yield siroheme. The chain is Siroheme synthase from Shigella boydii serotype 18 (strain CDC 3083-94 / BS512).